A 273-amino-acid polypeptide reads, in one-letter code: Type II pantothenate kinase (273 aa).

Residue 8–15 (DAGGTLTK) coordinates ATP. Glu76 serves as the catalytic Proton acceptor. ATP is bound by residues Thr105, 127-131 (GGTIM), Phe143, and Ser230.

This sequence belongs to the type II pantothenate kinase family. In terms of assembly, homodimer.

Its subcellular location is the cytoplasm. The enzyme catalyses (R)-pantothenate + ATP = (R)-4'-phosphopantothenate + ADP + H(+). It participates in cofactor biosynthesis; coenzyme A biosynthesis; CoA from (R)-pantothenate: step 1/5. In terms of biological role, catalyzes the phosphorylation of pantothenate (Pan), the first step in CoA biosynthesis. The sequence is that of Type II pantothenate kinase from Bacillus cereus (strain ATCC 14579 / DSM 31 / CCUG 7414 / JCM 2152 / NBRC 15305 / NCIMB 9373 / NCTC 2599 / NRRL B-3711).